The chain runs to 337 residues: Ferredoxin--NADP reductase (337 aa).

Positions 35, 43, 48, 88, 122, 289, and 330 each coordinate FAD.

It belongs to the ferredoxin--NADP reductase type 2 family. As to quaternary structure, homodimer. It depends on FAD as a cofactor.

It carries out the reaction 2 reduced [2Fe-2S]-[ferredoxin] + NADP(+) + H(+) = 2 oxidized [2Fe-2S]-[ferredoxin] + NADPH. In Ehrlichia ruminantium (strain Welgevonden), this protein is Ferredoxin--NADP reductase.